Consider the following 582-residue polypeptide: NAB transcription cofactor mab-10 (582 aa).

A compositionally biased stretch (low complexity) spans 1-70 (MSSSSSSSLP…SSSSQRQSTS (70 aa)). Disordered stretches follow at residues 1–84 (MSSS…MPTP), 257–287 (SDQQ…PAGI), 333–365 (PPSS…SPFL), and 516–582 (SRKR…LPES). Positions 83–161 (TPTTLSEWQL…EYSQDQTAFN (79 aa)) are NCD1. Composition is skewed to low complexity over residues 257 to 276 (SDQQ…STSS) and 333 to 345 (PPSS…PSTS). Residues 396 to 519 (LSTAQISRLA…GYNYAKSRKR (124 aa)) form an NCD2 region. Basic and acidic residues predominate over residues 573 to 582 (EKMKGELPES).

Belongs to the NAB family. In terms of assembly, interacts with transcription factor lin-29 (via C-terminus).

It is found in the nucleus. Functionally, transcriptional cofactor. Heterochronic protein, involved in timing of a subset of differentiation events during the larval-to-adult transition. Promotes hypodermal terminal differentiation, together with transcription factor lin-29, perhaps as part of a transcriptional complex. Involved in regulating molting by repressing the expression of nuclear hormone receptors nhr-23 and nhr-25 in the adult hypoderm, probably acting in concert with lin-29. The polypeptide is NAB transcription cofactor mab-10 (Caenorhabditis elegans).